Consider the following 291-residue polypeptide: ATP synthase gamma chain 2 (291 aa).

The segment at 187–208 is disordered; the sequence is LLPHPDKDESQDSKPNDATSRW. Residues 190–201 are compositionally biased toward basic and acidic residues; sequence HPDKDESQDSKP.

This sequence belongs to the ATPase gamma chain family. In terms of assembly, F-type ATPases have 2 components, CF(1) - the catalytic core - and CF(0) - the membrane proton channel. CF(1) has five subunits: alpha(3), beta(3), gamma(1), delta(1), epsilon(1). CF(0) has three main subunits: a, b and c.

The protein localises to the cell inner membrane. Its function is as follows. Produces ATP from ADP in the presence of a proton gradient across the membrane. The gamma chain is believed to be important in regulating ATPase activity and the flow of protons through the CF(0) complex. The chain is ATP synthase gamma chain 2 from Photobacterium profundum (strain SS9).